The chain runs to 178 residues: Inner membrane-spanning protein YciB (178 aa).

5 helical membrane-spanning segments follow: residues 22 to 42 (IFWATAALIVATALAVIYSWY), 50 to 70 (MTLVTFVLVAVFGGLTIYFHN), 76 to 96 (WKVTIIYALFAGALLIGQWVM), 121 to 141 (IAWALFFIFCGLLNIYVAFWL), and 149 to 169 (FKVFGIPGLTLVFTLLSGVYI).

The protein belongs to the YciB family.

It is found in the cell inner membrane. Functionally, plays a role in cell envelope biogenesis, maintenance of cell envelope integrity and membrane homeostasis. This is Inner membrane-spanning protein YciB from Cronobacter sakazakii (strain ATCC BAA-894) (Enterobacter sakazakii).